The following is a 129-amino-acid chain: Small ribosomal subunit protein uS11 (129 aa).

The protein belongs to the universal ribosomal protein uS11 family. In terms of assembly, part of the 30S ribosomal subunit. Interacts with proteins S7 and S18. Binds to IF-3.

In terms of biological role, located on the platform of the 30S subunit, it bridges several disparate RNA helices of the 16S rRNA. Forms part of the Shine-Dalgarno cleft in the 70S ribosome. This Francisella tularensis subsp. tularensis (strain FSC 198) protein is Small ribosomal subunit protein uS11.